The following is a 271-amino-acid chain: Formamidopyrimidine-DNA glycosylase (271 aa).

The active-site Schiff-base intermediate with DNA is Pro2. The active-site Proton donor is Glu3. Catalysis depends on Lys57, which acts as the Proton donor; for beta-elimination activity. Residues His90, Arg109, and Lys150 each contribute to the DNA site. The segment at 235–269 (LVYGNKDKPCPKCGGKIESLIIGQRNSFFCPKCQK) adopts an FPG-type zinc-finger fold. The Proton donor; for delta-elimination activity role is filled by Arg259.

It belongs to the FPG family. Monomer. Requires Zn(2+) as cofactor.

It catalyses the reaction Hydrolysis of DNA containing ring-opened 7-methylguanine residues, releasing 2,6-diamino-4-hydroxy-5-(N-methyl)formamidopyrimidine.. The catalysed reaction is 2'-deoxyribonucleotide-(2'-deoxyribose 5'-phosphate)-2'-deoxyribonucleotide-DNA = a 3'-end 2'-deoxyribonucleotide-(2,3-dehydro-2,3-deoxyribose 5'-phosphate)-DNA + a 5'-end 5'-phospho-2'-deoxyribonucleoside-DNA + H(+). Involved in base excision repair of DNA damaged by oxidation or by mutagenic agents. Acts as a DNA glycosylase that recognizes and removes damaged bases. Has a preference for oxidized purines, such as 7,8-dihydro-8-oxoguanine (8-oxoG). Has AP (apurinic/apyrimidinic) lyase activity and introduces nicks in the DNA strand. Cleaves the DNA backbone by beta-delta elimination to generate a single-strand break at the site of the removed base with both 3'- and 5'-phosphates. The protein is Formamidopyrimidine-DNA glycosylase of Haemophilus influenzae (strain PittEE).